The sequence spans 450 residues: Bifunctional protein GlmU (450 aa).

Residues 1 to 226 (MLAVAVLAAG…PDEVNGINNR (226 aa)) are pyrophosphorylase. Residues 7-10 (LAAG), Lys-21, Gln-73, and 78-79 (GT) contribute to the UDP-N-acetyl-alpha-D-glucosamine site. Position 103 (Asp-103) interacts with Mg(2+). The UDP-N-acetyl-alpha-D-glucosamine site is built by Gly-140, Glu-155, Asn-170, and Asn-224. A Mg(2+)-binding site is contributed by Asn-224. The segment at 227 to 247 (KQLAQCEGVLQQRLRDYWMDE) is linker. The interval 248-450 (GVTFVDPASC…TKDNWANRSI (203 aa)) is N-acetyltransferase. Arg-329 and Lys-347 together coordinate UDP-N-acetyl-alpha-D-glucosamine. His-359 acts as the Proton acceptor in catalysis. UDP-N-acetyl-alpha-D-glucosamine contacts are provided by Tyr-362 and Asn-373. Residues Ala-376, 382-383 (NY), Ala-419, and Arg-436 contribute to the acetyl-CoA site.

This sequence in the N-terminal section; belongs to the N-acetylglucosamine-1-phosphate uridyltransferase family. It in the C-terminal section; belongs to the transferase hexapeptide repeat family. As to quaternary structure, homotrimer. Requires Mg(2+) as cofactor.

The protein localises to the cytoplasm. It catalyses the reaction alpha-D-glucosamine 1-phosphate + acetyl-CoA = N-acetyl-alpha-D-glucosamine 1-phosphate + CoA + H(+). It carries out the reaction N-acetyl-alpha-D-glucosamine 1-phosphate + UTP + H(+) = UDP-N-acetyl-alpha-D-glucosamine + diphosphate. The protein operates within nucleotide-sugar biosynthesis; UDP-N-acetyl-alpha-D-glucosamine biosynthesis; N-acetyl-alpha-D-glucosamine 1-phosphate from alpha-D-glucosamine 6-phosphate (route II): step 2/2. Its pathway is nucleotide-sugar biosynthesis; UDP-N-acetyl-alpha-D-glucosamine biosynthesis; UDP-N-acetyl-alpha-D-glucosamine from N-acetyl-alpha-D-glucosamine 1-phosphate: step 1/1. It functions in the pathway bacterial outer membrane biogenesis; LPS lipid A biosynthesis. In terms of biological role, catalyzes the last two sequential reactions in the de novo biosynthetic pathway for UDP-N-acetylglucosamine (UDP-GlcNAc). The C-terminal domain catalyzes the transfer of acetyl group from acetyl coenzyme A to glucosamine-1-phosphate (GlcN-1-P) to produce N-acetylglucosamine-1-phosphate (GlcNAc-1-P), which is converted into UDP-GlcNAc by the transfer of uridine 5-monophosphate (from uridine 5-triphosphate), a reaction catalyzed by the N-terminal domain. This Synechococcus sp. (strain CC9902) protein is Bifunctional protein GlmU.